The sequence spans 872 residues: Extended synaptotagmin-2-A (872 aa).

The tract at residues 1–25 is disordered; sequence MSSESSAEKGPPPSPAENVQPGVPP. The Cytoplasmic portion of the chain corresponds to 1–31; sequence MSSESSAEKGPPPSPAENVQPGVPPAAEEPG. The helical transmembrane segment at 32 to 52 threads the bilayer; sequence MISVDIAGLFYQFSKTFILIF. The Lumenal segment spans residues 53-55; that stretch reads PVY. A helical transmembrane segment spans residues 56–76; sequence VLGYFGLSFSWLLIALVLLLW. Over 77-872 the chain is Cytoplasmic; it reads WRRNKGNKNS…EDGTRPAVSS (796 aa). Residues 119 to 298 enclose the SMP-LTD domain; sequence DIERAEWLNK…LPNRITVPLV (180 aa). 2 consecutive C2 domains span residues 297-417 and 442-588; these read LVSD…DEWF and NLDQ…HLNN. Ca(2+)-binding residues include lysine 328, aspartate 329, aspartate 341, aspartate 388, glutamate 389, aspartate 390, aspartate 392, aspartate 394, and aspartate 395. The segment covering 608–617 has biased composition (basic and acidic residues); sequence KPVRSPDEQH. The disordered stretch occupies residues 608 to 711; it reads KPVRSPDEQH…EPTPSIASDI (104 aa). Residues 632–652 are compositionally biased toward pro residues; that stretch reads PPTPQMPSPSPAVAHKPPPTP. The segment covering 664–681 has biased composition (polar residues); it reads NKGTPPSASPKSPTELHQ. The segment covering 682–696 has biased composition (low complexity); sequence SSSSLSGSSFTYSPS. The 123-residue stretch at 737 to 859 folds into the C2 3 domain; sequence PLGQIQLTIR…DAAKGWTQWY (123 aa). The tract at residues 784-791 is required for phosphatidylinositol 4,5-bisphosphate-dependent location at the cell membrane; sequence KRRSGRRK.

It belongs to the extended synaptotagmin family. Interacts with fgfr1 that has been activated by fgf1 binding. Interacts (via C2 domains) with the AP-2 complex (via an alpha subunit). Identified in a complex with the AP-2 complex and fgfr1.

It localises to the cell membrane. The protein localises to the endoplasmic reticulum membrane. In terms of biological role, tethers the endoplasmic reticulum to the cell membrane and promotes the formation of appositions between the endoplasmic reticulum and the cell membrane. Binds glycerophospholipids in a barrel-like domain and may play a role in cellular lipid transport. Plays a role in the rapid internalization of fgfr1 that has been activated by fgf1 binding; this occurs most likely via the AP-2 complex. Required for normal fgf signaling and the activation of downstream signaling cascades via its role in the internalization of activated fgfr1. Required for normal embryonic development via its role in fgf signaling and the downstream regulation of t/xBRA expression. This chain is Extended synaptotagmin-2-A (esyt2-a), found in Xenopus laevis (African clawed frog).